The primary structure comprises 478 residues: Adenylosuccinate lyase (478 aa).

Residues arginine 14–tyrosine 15, lysine 81–aspartate 83, and threonine 107–serine 108 each bind substrate. The active-site Proton donor/acceptor is histidine 155. Glutamine 237 contacts substrate. Serine 285 acts as the Proton donor/acceptor in catalysis. Positions 299, 325, 330, and 334 each coordinate substrate.

This sequence belongs to the lyase 1 family. Adenylosuccinate lyase subfamily. As to quaternary structure, homotetramer. Residues from neighboring subunits contribute catalytic and substrate-binding residues to each active site.

It catalyses the reaction N(6)-(1,2-dicarboxyethyl)-AMP = fumarate + AMP. The enzyme catalyses (2S)-2-[5-amino-1-(5-phospho-beta-D-ribosyl)imidazole-4-carboxamido]succinate = 5-amino-1-(5-phospho-beta-D-ribosyl)imidazole-4-carboxamide + fumarate. It participates in purine metabolism; AMP biosynthesis via de novo pathway; AMP from IMP: step 2/2. It functions in the pathway purine metabolism; IMP biosynthesis via de novo pathway; 5-amino-1-(5-phospho-D-ribosyl)imidazole-4-carboxamide from 5-amino-1-(5-phospho-D-ribosyl)imidazole-4-carboxylate: step 2/2. Catalyzes two non-sequential steps in de novo AMP synthesis: converts (S)-2-(5-amino-1-(5-phospho-D-ribosyl)imidazole-4-carboxamido)succinate (SAICAR) to fumarate plus 5-amino-1-(5-phospho-D-ribosyl)imidazole-4-carboxamide, and thereby also contributes to de novo IMP synthesis, and converts succinyladenosine monophosphate (SAMP) to AMP and fumarate. This is Adenylosuccinate lyase from Caenorhabditis briggsae.